The sequence spans 509 residues: Maturase K (509 aa).

Belongs to the intron maturase 2 family. MatK subfamily.

It localises to the plastid. The protein resides in the chloroplast. Its function is as follows. Usually encoded in the trnK tRNA gene intron. Probably assists in splicing its own and other chloroplast group II introns. The protein is Maturase K of Thujopsis dolabrata (Hiba arborvitae).